A 400-amino-acid polypeptide reads, in one-letter code: Large envelope protein (400 aa).

An N-acetylmethionine modification is found at Met1. Disordered stretches follow at residues 1–42 and 84–118; these read MGGY…NNPD and ILTT…SHPQ. Gly2 carries the N-myristoyl glycine; by host lipid modification. A pre-S1 region spans residues 2 to 119; the sequence is GGYSSKPRKG…PPLRDSHPQA (118 aa). The tract at residues 2–174 is pre-S; sequence GGYSSKPRKG…FSRTGDPVPK (173 aa). Topologically, residues 2-181 are virion surface; in external conformation; the sequence is GGYSSKPRKG…VPKMENTTSG (180 aa). The Intravirion; in internal conformation portion of the chain corresponds to 2 to 253; sequence GGYSSKPRKG…PGYRWMCLRR (252 aa). Tyr4 carries an N-linked (GlcNAc...) asparagine glycan. Positions 120–174 are pre-S2; it reads MQWNSTTFHQALLDPRVRGLYFPAGGSSSGTANPVPTTASPISSIFSRTGDPVPK. A helical transmembrane segment spans residues 182 to 202; sequence FLGPLLVLQAGFFLLTRILTI. The Intravirion; in external conformation segment spans residues 203-253; that stretch reads PQSLDSWWTSLNFLGGAPACPGQNSQSPTSNHSPTSCPPICPGYRWMCLRR. The chain crosses the membrane as a helical span at residues 254–274; that stretch reads FIIFLFILLLCLIFLLVLLDY. Over 275–348 the chain is Virion surface; it reads QGMLPVCPLI…WASVRFSWLS (74 aa). Residue Asn320 is glycosylated (N-linked (GlcNAc...) asparagine; by host). The helical transmembrane segment at 349-369 threads the bilayer; sequence LLAPFVQWFVGLSPTVWLSVI. Topologically, residues 370-375 are intravirion; that stretch reads WMMWYW. The chain crosses the membrane as a helical span at residues 376 to 398; it reads GPSLYNILSPFLPLLPIFFCLWV. The Virion surface segment spans residues 399–400; it reads YI.

The protein belongs to the orthohepadnavirus major surface antigen family. In its internal form (Li-HBsAg), interacts with the capsid protein and with the isoform S. Interacts with host chaperone CANX. As to quaternary structure, associates with host chaperone CANX through its pre-S2 N glycan; this association may be essential for isoform M proper secretion. In terms of assembly, interacts with isoform L. Interacts with the antigens of satellite virus HDV (HDVAgs); this interaction is required for encapsidation of HDV genomic RNA. In terms of processing, isoform M is N-terminally acetylated by host at a ratio of 90%, and N-glycosylated by host at the pre-S2 region. Myristoylated.

Its subcellular location is the virion membrane. Functionally, the large envelope protein exists in two topological conformations, one which is termed 'external' or Le-HBsAg and the other 'internal' or Li-HBsAg. In its external conformation the protein attaches the virus to cell receptors and thereby initiating infection. This interaction determines the species specificity and liver tropism. This attachment induces virion internalization predominantly through caveolin-mediated endocytosis. The large envelope protein also assures fusion between virion membrane and endosomal membrane. In its internal conformation the protein plays a role in virion morphogenesis and mediates the contact with the nucleocapsid like a matrix protein. The middle envelope protein plays an important role in the budding of the virion. It is involved in the induction of budding in a nucleocapsid independent way. In this process the majority of envelope proteins bud to form subviral lipoprotein particles of 22 nm of diameter that do not contain a nucleocapsid. This Homo sapiens (Human) protein is Large envelope protein.